The sequence spans 250 residues: 3-deoxy-manno-octulosonate cytidylyltransferase (250 aa).

Belongs to the KdsB family.

Its subcellular location is the cytoplasm. It catalyses the reaction 3-deoxy-alpha-D-manno-oct-2-ulosonate + CTP = CMP-3-deoxy-beta-D-manno-octulosonate + diphosphate. It functions in the pathway nucleotide-sugar biosynthesis; CMP-3-deoxy-D-manno-octulosonate biosynthesis; CMP-3-deoxy-D-manno-octulosonate from 3-deoxy-D-manno-octulosonate and CTP: step 1/1. It participates in bacterial outer membrane biogenesis; lipopolysaccharide biosynthesis. Activates KDO (a required 8-carbon sugar) for incorporation into bacterial lipopolysaccharide in Gram-negative bacteria. The protein is 3-deoxy-manno-octulosonate cytidylyltransferase of Yersinia pseudotuberculosis serotype O:1b (strain IP 31758).